Consider the following 191-residue polypeptide: Molybdenum cofactor guanylyltransferase (191 aa).

GTP is bound by residues 13–15 (LAG), Lys-26, Asp-72, and Asp-102. Position 102 (Asp-102) interacts with Mg(2+).

The protein belongs to the MobA family. Monomer. Requires Mg(2+) as cofactor.

The protein resides in the cytoplasm. It catalyses the reaction Mo-molybdopterin + GTP + H(+) = Mo-molybdopterin guanine dinucleotide + diphosphate. Functionally, transfers a GMP moiety from GTP to Mo-molybdopterin (Mo-MPT) cofactor (Moco or molybdenum cofactor) to form Mo-molybdopterin guanine dinucleotide (Mo-MGD) cofactor. The chain is Molybdenum cofactor guanylyltransferase from Pseudomonas putida (strain GB-1).